A 185-amino-acid polypeptide reads, in one-letter code: Elongation factor P (185 aa).

The protein belongs to the elongation factor P family.

It localises to the cytoplasm. It participates in protein biosynthesis; polypeptide chain elongation. In terms of biological role, involved in peptide bond synthesis. Stimulates efficient translation and peptide-bond synthesis on native or reconstituted 70S ribosomes in vitro. Probably functions indirectly by altering the affinity of the ribosome for aminoacyl-tRNA, thus increasing their reactivity as acceptors for peptidyl transferase. The chain is Elongation factor P from Deinococcus geothermalis (strain DSM 11300 / CIP 105573 / AG-3a).